The following is a 973-amino-acid chain: DNA repair protein rhp26 (973 aa).

The stretch at 35–107 (ESREIEKKRL…DIKRRLNNED (73 aa)) forms a coiled coil. The disordered stretch occupies residues 230–251 (RDQASASENNKDRGEFEGKDEW). Residues 238-251 (NNKDRGEFEGKDEW) show a composition bias toward basic and acidic residues. Positions 289–490 (WELYCQEAGG…WNLFDFVFPG (202 aa)) constitute a Helicase ATP-binding domain. 302–309 (DEMGLGKT) lines the ATP pocket. The tract at residues 367-386 (SREKRQYESDASESEAEESK) is disordered. Residues 441-444 (DEGH) carry the DEAH box motif. The Helicase C-terminal domain maps to 629 to 789 (VIRALLTLWK…RRFFKMTDLH (161 aa)). Disordered stretches follow at residues 803 to 846 (ETGS…KGKK), 863 to 882 (KYKP…STLG), and 930 to 973 (AVSS…KQRR). Residues 834 to 846 (DRKKHKIHDKGKK) show a composition bias toward basic residues. Polar residues-rich tracts occupy residues 868 to 882 (QESN…STLG) and 947 to 965 (STNV…SSTL).

The protein resides in the cytoplasm. It localises to the nucleus. Its function is as follows. Involved in transcription-coupled repair (TCR). The sequence is that of DNA repair protein rhp26 (rhp26) from Schizosaccharomyces pombe (strain 972 / ATCC 24843) (Fission yeast).